The sequence spans 277 residues: Xyloglucan endotransglucosylase/hydrolase protein 19 (277 aa).

Residues Met1–Ala21 form the signal peptide. The region spanning Gly22–Tyr213 is the GH16 domain. Glu99 serves as the catalytic Nucleophile. Glu103 serves as the catalytic Proton donor. Glu103 lines the xyloglucan pocket. Asn107 carries an N-linked (GlcNAc...) asparagine glycan. Residues His116–Asn118, Asp126–Glu128, His192–Trp193, and Gly197 each bind xyloglucan. 2 cysteine pairs are disulfide-bonded: Cys221-Cys230 and Cys262-Cys276. Arg267 is a xyloglucan binding site.

The protein belongs to the glycosyl hydrolase 16 family. XTH group 2 subfamily. In terms of processing, contains at least one intrachain disulfide bond essential for its enzymatic activity. In terms of tissue distribution, root specific.

It localises to the secreted. The protein localises to the cell wall. The protein resides in the extracellular space. It is found in the apoplast. It carries out the reaction breaks a beta-(1-&gt;4) bond in the backbone of a xyloglucan and transfers the xyloglucanyl segment on to O-4 of the non-reducing terminal glucose residue of an acceptor, which can be a xyloglucan or an oligosaccharide of xyloglucan.. Functionally, possesses xyloglucan endotransglucosylase (XET) activity in vitro. Does not possess xyloglucan endohydrolysis (XEH) activity. Cleaves and religates xyloglucan polymers, an essential constituent of the primary cell wall, and thereby participates in cell wall construction of growing tissues. Involved in cell proliferation in the tissue reunion process of wounded inflorescence stems. Maybe a downstream target of NAC071 as a consequence of auxin action in wounded stems. The sequence is that of Xyloglucan endotransglucosylase/hydrolase protein 19 from Arabidopsis thaliana (Mouse-ear cress).